Reading from the N-terminus, the 80-residue chain is RNA-binding protein Hfq (80 aa).

One can recognise a Sm domain in the interval 10 to 69; it reads DPFLNALRKEHVPVSIYLVNGIKLQGNIESFDQYVVLLRNTVTQMVYKHAISTVVPARPV.

The protein belongs to the Hfq family. As to quaternary structure, homohexamer.

Functionally, RNA chaperone that binds small regulatory RNA (sRNAs) and mRNAs to facilitate mRNA translational regulation in response to envelope stress, environmental stress and changes in metabolite concentrations. Also binds with high specificity to tRNAs. The sequence is that of RNA-binding protein Hfq from Burkholderia ambifaria (strain ATCC BAA-244 / DSM 16087 / CCUG 44356 / LMG 19182 / AMMD) (Burkholderia cepacia (strain AMMD)).